The chain runs to 210 residues: Cytochrome c biogenesis ATP-binding export protein CcmA (210 aa).

The ABC transporter domain occupies 1–208; the sequence is MHLNQLVISH…KVRTLSLDQF (208 aa). Residue 38-45 participates in ATP binding; the sequence is GHNGIGKT.

It belongs to the ABC transporter superfamily. CcmA exporter (TC 3.A.1.107) family. In terms of assembly, the complex is composed of two ATP-binding proteins (CcmA) and two transmembrane proteins (CcmB).

The protein localises to the cell inner membrane. The enzyme catalyses heme b(in) + ATP + H2O = heme b(out) + ADP + phosphate + H(+). In terms of biological role, part of the ABC transporter complex CcmAB involved in the biogenesis of c-type cytochromes; once thought to export heme, this seems not to be the case, but its exact role is uncertain. Responsible for energy coupling to the transport system. The sequence is that of Cytochrome c biogenesis ATP-binding export protein CcmA from Haemophilus ducreyi (strain 35000HP / ATCC 700724).